Here is a 312-residue protein sequence, read N- to C-terminus: Apolipoprotein E (312 aa).

Positions 1–18 are cleaved as a signal peptide; the sequence is MKALWALLLVPLLTGCLA. Repeat copies occupy residues 72 to 93, 94 to 115, 116 to 137, 138 to 159, 160 to 181, 182 to 203, 204 to 225, and 226 to 247. The 8 X 22 AA approximate tandem repeats stretch occupies residues 72–247; sequence VLMEDTMTEV…RLEEVRDQME (176 aa). Position 135 is a methionine sulfoxide (M135). S139 bears the Phosphoserine mark. Residues 150–160 are LDL and other lipoprotein receptors binding; that stretch reads HLRKMRKRLMR. The segment at 150–160 is LDL receptor binding; the sequence is HLRKMRKRLMR. 154-157 is a binding site for heparin; that stretch reads MRKR. The interval 202–282 is lipid-binding and lipoprotein association; it reads TANLGSGAAQ…GWFEPLVEDM (81 aa). 221 to 228 serves as a coordination point for heparin; sequence SDRIRGRL. Positions 258–312 are homooligomerization; it reads QQIRLQAEVFQARLKGWFEPLVEDMQRQWANLMEKIQASVATNSIASTTVPLENQ. Positions 270–282 are specificity for association with VLDL; the sequence is RLKGWFEPLVEDM.

Belongs to the apolipoprotein A1/A4/E family. As to quaternary structure, homotetramer. May interact with ABCA1; functionally associated with ABCA1 in the biogenesis of HDLs. May interact with APP/A4 amyloid-beta peptide; the interaction is extremely stable in vitro but its physiological significance is unclear. May interact with MAPT. May interact with MAP2. In the cerebrospinal fluid, interacts with secreted SORL1. Interacts with PMEL; this allows the loading of PMEL luminal fragment on ILVs to induce fibril nucleation. Post-translationally, APOE exists as multiple glycosylated and sialylated glycoforms within cells and in plasma. The extent of glycosylation and sialylation are tissue and context specific. Glycated in plasma VLDL. In terms of processing, phosphorylated by FAM20C in the extracellular medium.

It localises to the secreted. The protein resides in the extracellular space. The protein localises to the extracellular matrix. It is found in the extracellular vesicle. Its subcellular location is the endosome. It localises to the multivesicular body. Functionally, APOE is an apolipoprotein, a protein associating with lipid particles, that mainly functions in lipoprotein-mediated lipid transport between organs via the plasma and interstitial fluids. APOE is a core component of plasma lipoproteins and is involved in their production, conversion and clearance. Apolipoproteins are amphipathic molecules that interact both with lipids of the lipoprotein particle core and the aqueous environment of the plasma. As such, APOE associates with chylomicrons, chylomicron remnants, very low density lipoproteins (VLDL) and intermediate density lipoproteins (IDL) but shows a preferential binding to high-density lipoproteins (HDL). It also binds a wide range of cellular receptors including the LDL receptor/LDLR, the LDL receptor-related proteins LRP1, LRP2 and LRP8 and the very low-density lipoprotein receptor/VLDLR that mediate the cellular uptake of the APOE-containing lipoprotein particles. Finally, APOE also has a heparin-binding activity and binds heparan-sulfate proteoglycans on the surface of cells, a property that supports the capture and the receptor-mediated uptake of APOE-containing lipoproteins by cells. A main function of APOE is to mediate lipoprotein clearance through the uptake of chylomicrons, VLDLs, and HDLs by hepatocytes. APOE is also involved in the biosynthesis by the liver of VLDLs as well as their uptake by peripheral tissues ensuring the delivery of triglycerides and energy storage in muscle, heart and adipose tissues. By participating in the lipoprotein-mediated distribution of lipids among tissues, APOE plays a critical role in plasma and tissues lipid homeostasis. APOE is also involved in two steps of reverse cholesterol transport, the HDLs-mediated transport of cholesterol from peripheral tissues to the liver, and thereby plays an important role in cholesterol homeostasis. First, it is functionally associated with ABCA1 in the biogenesis of HDLs in tissues. Second, it is enriched in circulating HDLs and mediates their uptake by hepatocytes. APOE also plays an important role in lipid transport in the central nervous system, regulating neuron survival and sprouting. This Rattus rattus (Black rat) protein is Apolipoprotein E (Apoe).